Here is a 100-residue protein sequence, read N- to C-terminus: Carboxysome shell vertex protein CcmL (100 aa).

One can recognise a BMV domain in the interval 1-83 (MQIGRVRGTV…VDAVVIGIID (83 aa)).

This sequence belongs to the CcmL/EutN family. CcmL subfamily. As to quaternary structure, homopentamer. Interacts with full-length CcmM.

It localises to the carboxysome. Probably forms vertices in the carboxysome, a polyhedral inclusion where RuBisCO (ribulose bisphosphate carboxylase, rbcL-rbcS) is sequestered. Has been modeled to induce curvature upon insertion into an otherwise flat hexagonal molecular layer of CcmK subunits. The polypeptide is Carboxysome shell vertex protein CcmL (Gloeobacter violaceus (strain ATCC 29082 / PCC 7421)).